The following is a 371-amino-acid chain: 4-hydroxyprotoasukamycin monooxygenase (371 aa).

It belongs to the bacterial luciferase oxidoreductase family. It depends on FMN as a cofactor.

It carries out the reaction 4-hydroxyprotoasukamycin + NADH + O2 + H(+) = asukamycin + NAD(+) + H2O. The protein operates within antibiotic biosynthesis. Its function is as follows. Involved in the biosynthesis of the antibiotic asukamycin. Catalyzes the epoxidation of 4-hydroxyprotoasukamycin to the final product, asukamycin. Can also convert some 4-hydroxyprotoasukamycin derivatives to their asukamycin derivatives, but cannot use protoasukamycin as substrate. Can also use NADPH, but catalytic efficiency is 20-fold higher with NADH. The protein is 4-hydroxyprotoasukamycin monooxygenase of Streptomyces nodosus subsp. asukaensis.